We begin with the raw amino-acid sequence, 189 residues long: 3-hydroxyanthranilate 3,4-dioxygenase (189 aa).

R46 is an O2 binding site. Residues H50, E56, and H94 each coordinate Fe cation. Position 56 (E56) interacts with substrate. Substrate is bound by residues R98 and E109. Positions 124, 127, 161, and 164 each coordinate Fe cation.

The protein belongs to the 3-HAO family. Homodimer. It depends on Fe(2+) as a cofactor.

It carries out the reaction 3-hydroxyanthranilate + O2 = (2Z,4Z)-2-amino-3-carboxymuconate 6-semialdehyde. Its pathway is cofactor biosynthesis; NAD(+) biosynthesis; quinolinate from L-kynurenine: step 3/3. Catalyzes the oxidative ring opening of 3-hydroxyanthranilate to 2-amino-3-carboxymuconate semialdehyde, which spontaneously cyclizes to quinolinate. This is 3-hydroxyanthranilate 3,4-dioxygenase from Shewanella woodyi (strain ATCC 51908 / MS32).